The following is a 135-amino-acid chain: Centromere protein S (135 aa).

Residues 103-135 form a disordered region; it reads SLEQKEKKKKKSVSGGNVSRNSDMDTVVPESKD.

This sequence belongs to the TAF9 family. CENP-S/MHF1 subfamily. Heterodimer with CENPX, sometimes called MHF; this interaction stabilizes both partners. MHF heterodimers can assemble to form tetrameric structures. MHF also coassemble with CENPT-CENPW heterodimers at centromeres to form the tetrameric CENP-T-W-S-X complex. Forms a discrete complex with FANCM and CENPX, called FANCM-MHF; this interaction, probably mediated by direct binding between CENPS and FANCM, leads to synergistic activation of double-stranded DNA binding and strongly stimulates FANCM-mediated DNA remodeling. Recruited by FANCM to the Fanconi anemia (FA) core complex, which consists of CENPS, CENPX, FANCA, FANCB, FANCC, FANCE, FANCF, FANCG, FANCL, FANCM, FAAP24 and FAAP100. The FA core complex associates with Bloom syndrome (BLM) complex, which consists of at least BLM, DNA topoisomerase 3-alpha (TOP3A), RMI1/BLAP75, RPA1/RPA70 and RPA2/RPA32. The super complex between FA and BLM is called BRAFT. Component of the CENPA-CAD complex, composed of CENPI, CENPK, CENPL, CENPO, CENPP, CENPQ, CENPR and CENPS. The CENPA-CAD complex is probably recruited on centromeres by the CENPA-NAC complex, at least composed of CENPA, CENPC, CENPH, CENPM, CENPN, CENPT and CENPU.

The protein localises to the nucleus. The protein resides in the chromosome. Its subcellular location is the centromere. It is found in the kinetochore. DNA-binding component of the Fanconi anemia (FA) core complex. Required for the normal activation of the FA pathway, leading to monoubiquitination of the FANCI-FANCD2 complex in response to DNA damage, cellular resistance to DNA cross-linking drugs, and prevention of chromosomal breakage. In complex with CENPX (MHF heterodimer), crucial cofactor for FANCM in both binding and ATP-dependent remodeling of DNA. Stabilizes FANCM. In complex with CENPX and FANCM (but not other FANC proteins), rapidly recruited to blocked forks and promotes gene conversion at blocked replication forks. In complex with CENPT, CENPW and CENPX (CENP-T-W-S-X heterotetramer), involved in the formation of a functional kinetochore outer plate, which is essential for kinetochore-microtubule attachment and faithful mitotic progression. As a component of MHF and CENP-T-W-S-X complexes, binds DNA and bends it to form a nucleosome-like structure. DNA-binding function is fulfilled in the presence of CENPX, with the following preference for DNA substates: Holliday junction &gt; double-stranded &gt; splay arm &gt; single-stranded. Does not bind DNA on its own. This chain is Centromere protein S (cenps), found in Xenopus laevis (African clawed frog).